Consider the following 250-residue polypeptide: uncharacterized protein (250 aa).

4Fe-4S ferredoxin-type domains are found at residues 38 to 67 (KLLYINETKCIRCNLCYKECPVDAIEKAKV), 69 to 98 (KSAKIIEDKCVKCEICAQTCPVGAIYVIEG), 124 to 153 (KKYELDENTCIKCGICARFCPTNAIKAVRR), 154 to 183 (KSIEVNLDLCMGCGACAEVCPKKCIKVERE), 191 to 220 (RDIEVDKNLCVGCLVCIEECPINAIDQDGD), and 220 to 249 (DKVKINKDKCILCGRCVDVCPTNAIKMWEK). Positions 47, 50, 53, 57, 78, 81, 84, 88, 133, 136, 139, 143, 163, 166, 169, 173, 200, 203, 206, 210, 229, 232, 235, and 239 each coordinate [4Fe-4S] cluster.

This is an uncharacterized protein from Methanocaldococcus jannaschii (strain ATCC 43067 / DSM 2661 / JAL-1 / JCM 10045 / NBRC 100440) (Methanococcus jannaschii).